Consider the following 1178-residue polypeptide: Autophagy-related protein 11 (1178 aa).

2 coiled-coil regions span residues 538 to 572 (EDEE…IKET) and 696 to 850 (SQAN…SYAE).

It belongs to the ATG11 family. In terms of assembly, homodimer and potential homooligomers. Interacts with ATG1 kinase. Interacts with the ATG19 cargo protein transporter. Interacts with the ATG34 cargo protein transporter. Interacts with ATG9. Interacts with ATG17. Interacts with ATG20. Interacts with ATG30. Interacts with ATG32; to recruit ATG11 to mitochondria. Interacts with ATG36. Interacts with YPT1. Post-translationally, acetylated by the NuA4 histone acetyltransferase (HAT) complex.

The protein localises to the preautophagosomal structure membrane. Its subcellular location is the vacuole membrane. Involved in cytoplasm to vacuole transport (Cvt), pexophagy, mitophagy and nucleophagy. Recruits mitochondria for their selective degradation via autophagy (mitophagy) during starvation, through its interaction with ATG32. Works as scaffold proteins that recruit ATG proteins to the pre-autophagosome (PAS), the site of vesicle/autophagosome formation. Required for ATG9 anterograde transport from the mitochondria to the PAS. Also recruits the ATG19-prAPE1 complex to the PAS. Required for the Cvt vesicles completion. Plays a significant role in life span extension. This Saccharomyces cerevisiae (strain ATCC 204508 / S288c) (Baker's yeast) protein is Autophagy-related protein 11 (ATG11).